The following is a 676-amino-acid chain: E3 ubiquitin-protein ligase ICP0 (676 aa).

The RING-type zinc finger occupies 13 to 52 (CCICLDAITGAARALPCLHAFCLACIRRWLEGRPTCPLCK). 3 disordered regions span residues 101 to 153 (DLTA…GGRA), 266 to 517 (HLIP…AGAQ), and 555 to 676 (AAIS…AWRQ). Gly residues predominate over residues 123–153 (EAGGGAGGAEEAGEARGAGAGRAAGAAGGRA). Acidic residues predominate over residues 286-303 (SDSDSEGSEDDSWSESEE). Over residues 304–314 (SSSGLSTSDLT) the composition is skewed to low complexity. The span at 315 to 328 (AIDDTETEPETDAE) shows a compositional bias: acidic residues. Polar residues predominate over residues 351–361 (YVSTRGRQTPA). Low complexity-rich tracts occupy residues 375–388 (GRAA…SSRS) and 397–411 (LPAA…QARA). Residues 422 to 439 (GAGLGVAAGETAGWGAGS) are compositionally biased toward gly residues. The span at 440–450 (EEGRGERRARL) shows a compositional bias: basic and acidic residues. A compositionally biased stretch (pro residues) spans 474–484 (TPAPAPAPAPA). Residues 555–597 (AAISTRAPTPSPAGRAPAADPRRAGAPALAGAARAEVGRNGNP) are compositionally biased toward low complexity.

Belongs to the simplexviruses ICp0 family. Post-translationally, auto-ubiquitinated. Transactivation activity is possibly regulated through phosphorylation by casein kinase II.

The enzyme catalyses S-ubiquitinyl-[E2 ubiquitin-conjugating enzyme]-L-cysteine + [acceptor protein]-L-lysine = [E2 ubiquitin-conjugating enzyme]-L-cysteine + N(6)-ubiquitinyl-[acceptor protein]-L-lysine.. Functionally, evades nuclear antiviral defenses triggered by dsDNA viruses. Acts during the initial stages of lytic infection and the reactivation of latent viral genome. Prevents the antiviral effect of nuclear bodies by degrading host PML and SP100. The protein is E3 ubiquitin-protein ligase ICP0 (BICP0) of Bovine herpesvirus 1.1 (strain Cooper) (BoHV-1).